The chain runs to 58 residues: uncharacterized protein (58 aa).

This is an uncharacterized protein from Saccharomyces cerevisiae (strain ATCC 204508 / S288c) (Baker's yeast).